The following is a 203-amino-acid chain: Signal peptidase I (203 aa).

Positions 1–26 (MSSESDSPTPQTPPAQPAASQPKADS) are disordered. Topologically, residues 1–33 (MSSESDSPTPQTPPAQPAASQPKADSPLMEGIK) are cytoplasmic. The segment covering 17–26 (PAASQPKADS) has biased composition (low complexity). A helical transmembrane segment spans residues 34-50 (TIGLSVVLALGIRTFVA). The Extracellular portion of the chain corresponds to 51-203 (EARYIPSESM…LGELGPPPSY (153 aa)). Active-site residues include Ser59 and Lys109.

Belongs to the peptidase S26 family.

It localises to the cell membrane. It catalyses the reaction Cleavage of hydrophobic, N-terminal signal or leader sequences from secreted and periplasmic proteins.. In Leptolyngbya laminosa (Phormidium laminosum), this protein is Signal peptidase I (lepB).